A 422-amino-acid chain; its full sequence is S100P-binding protein (422 aa).

Disordered regions lie at residues 1–28 (MMCS…SWSS), 61–135 (LKDD…TPAK), and 170–292 (YVSE…DSGK). A compositionally biased stretch (basic and acidic residues) spans 80–90 (DDSRNVEKGEK). Position 195 is a phosphoserine (serine 195). Basic and acidic residues predominate over residues 231–241 (VSDKNMSDSKK). Polar residues predominate over residues 255-269 (TPNTGSSRRNGSYKS). A compositionally biased stretch (low complexity) spans 274–283 (KLPVSSSSSK).

Interacts with S100P.

The protein resides in the nucleus. This is S100P-binding protein from Bos taurus (Bovine).